The following is a 450-amino-acid chain: UDP-N-acetylmuramoylalanine--D-glutamate ligase (450 aa).

118 to 124 lines the ATP pocket; it reads GSNGKTT.

It belongs to the MurCDEF family.

Its subcellular location is the cytoplasm. The catalysed reaction is UDP-N-acetyl-alpha-D-muramoyl-L-alanine + D-glutamate + ATP = UDP-N-acetyl-alpha-D-muramoyl-L-alanyl-D-glutamate + ADP + phosphate + H(+). It participates in cell wall biogenesis; peptidoglycan biosynthesis. Functionally, cell wall formation. Catalyzes the addition of glutamate to the nucleotide precursor UDP-N-acetylmuramoyl-L-alanine (UMA). This chain is UDP-N-acetylmuramoylalanine--D-glutamate ligase, found in Halalkalibacterium halodurans (strain ATCC BAA-125 / DSM 18197 / FERM 7344 / JCM 9153 / C-125) (Bacillus halodurans).